A 469-amino-acid chain; its full sequence is 3-isopropylmalate dehydratase large subunit (469 aa).

3 residues coordinate [4Fe-4S] cluster: cysteine 350, cysteine 410, and cysteine 413.

Belongs to the aconitase/IPM isomerase family. LeuC type 1 subfamily. Heterodimer of LeuC and LeuD. [4Fe-4S] cluster is required as a cofactor.

The enzyme catalyses (2R,3S)-3-isopropylmalate = (2S)-2-isopropylmalate. It functions in the pathway amino-acid biosynthesis; L-leucine biosynthesis; L-leucine from 3-methyl-2-oxobutanoate: step 2/4. In terms of biological role, catalyzes the isomerization between 2-isopropylmalate and 3-isopropylmalate, via the formation of 2-isopropylmaleate. The chain is 3-isopropylmalate dehydratase large subunit from Rhizobium johnstonii (strain DSM 114642 / LMG 32736 / 3841) (Rhizobium leguminosarum bv. viciae).